The following is a 168-amino-acid chain: MVLGLASFPESLSSQSETATQPRRPSVKWDLGSDYRKGTEETTASGSNFRRERLDSQPDLGLHVQPQIYFLRPRSPLPKLLFSLMNTNDANVKKLLPKSHLSRVIIRDNLNAQRICEMEMKASDKTKRKMSYLYDHLKKKFMMDQLRKMIRWRRDSQSTQDYLDKERV.

The disordered stretch occupies residues 1–52 (MVLGLASFPESLSSQSETATQPRRPSVKWDLGSDYRKGTEETTASGSNFRRE). The span at 10 to 23 (ESLSSQSETATQPR) shows a compositional bias: polar residues. The segment covering 31 to 40 (LGSDYRKGTE) has biased composition (basic and acidic residues).

This is an uncharacterized protein from Mus musculus (Mouse).